The following is a 48-amino-acid chain: Large ribosomal subunit protein bL33A (48 aa).

It belongs to the bacterial ribosomal protein bL33 family.

In Streptococcus agalactiae serotype V (strain ATCC BAA-611 / 2603 V/R), this protein is Large ribosomal subunit protein bL33A.